A 119-amino-acid chain; its full sequence is Ribonuclease P protein component (119 aa).

Belongs to the RnpA family. As to quaternary structure, consists of a catalytic RNA component (M1 or rnpB) and a protein subunit.

The enzyme catalyses Endonucleolytic cleavage of RNA, removing 5'-extranucleotides from tRNA precursor.. Its function is as follows. RNaseP catalyzes the removal of the 5'-leader sequence from pre-tRNA to produce the mature 5'-terminus. It can also cleave other RNA substrates such as 4.5S RNA. The protein component plays an auxiliary but essential role in vivo by binding to the 5'-leader sequence and broadening the substrate specificity of the ribozyme. This chain is Ribonuclease P protein component, found in Salmonella arizonae (strain ATCC BAA-731 / CDC346-86 / RSK2980).